We begin with the raw amino-acid sequence, 434 residues long: Tubulin gamma chain (434 aa).

135-141 (AGGTGSG) is a GTP binding site.

Belongs to the tubulin family.

Its subcellular location is the cytoplasm. The protein localises to the cytoskeleton. It localises to the microtubule organizing center. The protein resides in the spindle pole body. Tubulin is the major constituent of microtubules. The gamma chain is found at microtubule organizing centers (MTOC) such as the spindle poles or the centrosome, suggesting that it is involved in the minus-end nucleation of microtubule assembly. The sequence is that of Tubulin gamma chain (TUB4) from Encephalitozoon cuniculi (strain GB-M1) (Microsporidian parasite).